Consider the following 236-residue polypeptide: Uridylate kinase (236 aa).

12-15 serves as a coordination point for ATP; the sequence is KLSG. Residues 20 to 25 form an involved in allosteric activation by GTP region; the sequence is GEKGFG. G54 serves as a coordination point for UMP. ATP is bound by residues G55 and R59. Residues D72 and 133–140 contribute to the UMP site; that span reads TGNPYFST. ATP-binding residues include N161, Y166, and D169.

This sequence belongs to the UMP kinase family. In terms of assembly, homohexamer.

It is found in the cytoplasm. It carries out the reaction UMP + ATP = UDP + ADP. Its pathway is pyrimidine metabolism; CTP biosynthesis via de novo pathway; UDP from UMP (UMPK route): step 1/1. Its activity is regulated as follows. Allosterically activated by GTP. Inhibited by UTP. In terms of biological role, catalyzes the reversible phosphorylation of UMP to UDP. This chain is Uridylate kinase, found in Alkaliphilus metalliredigens (strain QYMF).